Here is a 212-residue protein sequence, read N- to C-terminus: ATP-dependent dethiobiotin synthetase BioD (212 aa).

ATP is bound at residue Gly-13–Val-18. Thr-17 is a Mg(2+) binding site. Residue Lys-33 is part of the active site. Residue Ser-37 participates in substrate binding. Glu-100 is a binding site for Mg(2+). Residues Glu-100–Gly-103 and Pro-184–Leu-186 each bind ATP.

Belongs to the dethiobiotin synthetase family. Homodimer. Mg(2+) is required as a cofactor.

The protein resides in the cytoplasm. The catalysed reaction is (7R,8S)-7,8-diammoniononanoate + CO2 + ATP = (4R,5S)-dethiobiotin + ADP + phosphate + 3 H(+). It functions in the pathway cofactor biosynthesis; biotin biosynthesis; biotin from 7,8-diaminononanoate: step 1/2. Functionally, catalyzes a mechanistically unusual reaction, the ATP-dependent insertion of CO2 between the N7 and N8 nitrogen atoms of 7,8-diaminopelargonic acid (DAPA, also called 7,8-diammoniononanoate) to form a ureido ring. The polypeptide is ATP-dependent dethiobiotin synthetase BioD (Rhodopseudomonas palustris (strain TIE-1)).